We begin with the raw amino-acid sequence, 142 residues long: Hemoglobin subunit alpha (142 aa).

The Globin domain maps to 2–142 (VLSATDKSNV…VSTVLTSKYR (141 aa)). Phosphoserine is present on Ser4. N6-succinyllysine occurs at positions 8 and 12. Lys17 carries the post-translational modification N6-acetyllysine; alternate. The residue at position 17 (Lys17) is an N6-succinyllysine; alternate. Tyr25 carries the phosphotyrosine modification. Position 36 is a phosphoserine (Ser36). Lys41 carries the N6-succinyllysine modification. Position 50 is a phosphoserine (Ser50). His59 provides a ligand contact to O2. Heme b is bound at residue His88. Ser103 is subject to Phosphoserine. Thr109 is subject to Phosphothreonine. Ser125 is subject to Phosphoserine. Phosphothreonine occurs at positions 135 and 138. Position 139 is a phosphoserine (Ser139).

It belongs to the globin family. As to quaternary structure, heterotetramer of two alpha chains and two beta chains. As to expression, red blood cells.

Functionally, involved in oxygen transport from the lung to the various peripheral tissues. Hemopressin acts as an antagonist peptide of the cannabinoid receptor CNR1. Hemopressin-binding efficiently blocks cannabinoid receptor CNR1 and subsequent signaling. The sequence is that of Hemoglobin subunit alpha (HBA) from Alces alces alces (European moose).